Consider the following 166-residue polypeptide: Phospholipase A2 inhibitor (166 aa).

The first 19 residues, methionine 1 to glycine 19, serve as a signal peptide directing secretion. Residues leucine 46–glutamate 161 enclose the C-type lectin domain. N-linked (GlcNAc...) asparagine glycans are attached at residues asparagine 61 and asparagine 122. 2 cysteine pairs are disulfide-bonded: cysteine 83-cysteine 160 and cysteine 138-cysteine 152.

It belongs to the alpha-type phospholipase A2 inhibitor family. As to quaternary structure, homotrimer; non-covalently linked. As to expression, expressed by the liver.

Its subcellular location is the secreted. Functionally, this phospholipase A2 inhibitor binds directly phospholipase A2 in the presence or absence of calcium. The protein is Phospholipase A2 inhibitor of Bothrops alternatus (Urutu).